Consider the following 155-residue polypeptide: Endoribonuclease YbeY (155 aa).

The Zn(2+) site is built by His-120, His-124, and His-130.

Belongs to the endoribonuclease YbeY family. The cofactor is Zn(2+).

It localises to the cytoplasm. Single strand-specific metallo-endoribonuclease involved in late-stage 70S ribosome quality control and in maturation of the 3' terminus of the 16S rRNA. This is Endoribonuclease YbeY from Alkaliphilus metalliredigens (strain QYMF).